The sequence spans 393 residues: E3 ubiquitin-protein transferase RMND5B (393 aa).

At Met-1 the chain carries N-acetylmethionine. One can recognise a LisH domain in the interval 116-148; it reads QQQILQMAIVEHLYQQGMLSVAEELCQESTLNV. One can recognise a CTLH domain in the interval 155-212; that stretch reads PFLELNRILEALHEQDLGPALEWAVSHRQRLLELNSSLEFKLHRLHFIRLLAGGPEKQ. The RING-Gid-type zinc-finger motif lies at 338–379; the sequence is CPILRQQTSDSNPPIKLICGHVISRDALNKLINGGKLKCPYC.

Identified in the CTLH complex that contains GID4, RANBP9 and/or RANBP10, MKLN1, MAEA, RMND5A (or alternatively its paralog RMND5B), GID8, ARMC8, WDR26 and YPEL5. Within this complex, MAEA, RMND5A (or alternatively its paralog RMND5B), GID8, WDR26, and RANBP9 and/or RANBP10 form the catalytic core, while GID4, MKLN1, ARMC8 and YPEL5 have ancillary roles.

It is found in the cytoplasm. The protein localises to the cytosol. The catalysed reaction is S-ubiquitinyl-[E2 ubiquitin-conjugating enzyme]-L-cysteine + [acceptor protein]-L-lysine = [E2 ubiquitin-conjugating enzyme]-L-cysteine + N(6)-ubiquitinyl-[acceptor protein]-L-lysine.. Functionally, core component of the CTLH E3 ubiquitin-protein ligase complex that selectively accepts ubiquitin from UBE2H and mediates ubiquitination and subsequent proteasomal degradation of the transcription factor HBP1. MAEA and RMND5A are both required for catalytic activity of the CTLH E3 ubiquitin-protein ligase complex. Catalytic activity of the complex is required for normal cell proliferation. The CTLH E3 ubiquitin-protein ligase complex is not required for the degradation of enzymes involved in gluconeogenesis, such as FBP1. The chain is E3 ubiquitin-protein transferase RMND5B (Rmnd5b) from Mus musculus (Mouse).